The following is a 276-amino-acid chain: Undecaprenyl-diphosphatase 1 (276 aa).

The next 6 membrane-spanning stretches (helical) occupy residues 43 to 63 (RAMA…VWEF), 85 to 105 (ANLL…ADLI), 109 to 129 (LFNP…MLWA), 184 to 204 (ATEF…VYSG), 214 to 234 (ADFP…MIAV), and 254 to 274 (IVFG…WTAA).

It belongs to the UppP family.

The protein resides in the cell inner membrane. The catalysed reaction is di-trans,octa-cis-undecaprenyl diphosphate + H2O = di-trans,octa-cis-undecaprenyl phosphate + phosphate + H(+). Catalyzes the dephosphorylation of undecaprenyl diphosphate (UPP). Confers resistance to bacitracin. In Pseudomonas fluorescens (strain Pf0-1), this protein is Undecaprenyl-diphosphatase 1.